Reading from the N-terminus, the 400-residue chain is Probable phospho-2-dehydro-3-deoxyheptonate aldolase (400 aa).

It belongs to the class-II DAHP synthase family.

The catalysed reaction is D-erythrose 4-phosphate + phosphoenolpyruvate + H2O = 7-phospho-2-dehydro-3-deoxy-D-arabino-heptonate + phosphate. It participates in antibiotic biosynthesis; phenazine biosynthesis. This chain is Probable phospho-2-dehydro-3-deoxyheptonate aldolase (phzC), found in Pseudomonas fluorescens.